The following is a 197-amino-acid chain: Na(+)-translocating NADH-quinone reductase subunit E (197 aa).

The next 6 helical transmembrane spans lie at 11-31 (SVFI…FLAV), 35-55 (VSTA…SVPV), 76-96 (FLKF…LEMF), 108-128 (LGIY…VSFM), 139-159 (VVYG…LAGI), and 175-195 (LGIT…FSGI).

The protein belongs to the NqrDE/RnfAE family. Composed of six subunits; NqrA, NqrB, NqrC, NqrD, NqrE and NqrF.

It is found in the cell inner membrane. It carries out the reaction a ubiquinone + n Na(+)(in) + NADH + H(+) = a ubiquinol + n Na(+)(out) + NAD(+). Functionally, NQR complex catalyzes the reduction of ubiquinone-1 to ubiquinol by two successive reactions, coupled with the transport of Na(+) ions from the cytoplasm to the periplasm. NqrA to NqrE are probably involved in the second step, the conversion of ubisemiquinone to ubiquinol. This is Na(+)-translocating NADH-quinone reductase subunit E from Neisseria meningitidis serogroup C (strain 053442).